Consider the following 255-residue polypeptide: tRNA (guanine-N(1)-)-methyltransferase (255 aa).

S-adenosyl-L-methionine contacts are provided by residues Gly113 and 133 to 138; that span reads IGDYVL.

This sequence belongs to the RNA methyltransferase TrmD family. In terms of assembly, homodimer.

Its subcellular location is the cytoplasm. The enzyme catalyses guanosine(37) in tRNA + S-adenosyl-L-methionine = N(1)-methylguanosine(37) in tRNA + S-adenosyl-L-homocysteine + H(+). Specifically methylates guanosine-37 in various tRNAs. The chain is tRNA (guanine-N(1)-)-methyltransferase from Escherichia coli O6:K15:H31 (strain 536 / UPEC).